We begin with the raw amino-acid sequence, 336 residues long: tRNA N6-adenosine threonylcarbamoyltransferase (336 aa).

Fe cation-binding residues include H112 and H116. Substrate-binding positions include 136 to 140 (LVSGG), D169, G182, and N276. Residue D304 coordinates Fe cation.

It belongs to the KAE1 / TsaD family. Fe(2+) is required as a cofactor.

Its subcellular location is the cytoplasm. It catalyses the reaction L-threonylcarbamoyladenylate + adenosine(37) in tRNA = N(6)-L-threonylcarbamoyladenosine(37) in tRNA + AMP + H(+). In terms of biological role, required for the formation of a threonylcarbamoyl group on adenosine at position 37 (t(6)A37) in tRNAs that read codons beginning with adenine. Is involved in the transfer of the threonylcarbamoyl moiety of threonylcarbamoyl-AMP (TC-AMP) to the N6 group of A37, together with TsaE and TsaB. TsaD likely plays a direct catalytic role in this reaction. This is tRNA N6-adenosine threonylcarbamoyltransferase from Francisella tularensis subsp. novicida (strain U112).